We begin with the raw amino-acid sequence, 715 residues long: MKNKNRGFFRSSLSYAFVILAVIFLIYSFFGRSDGSVKHLSTTTFLKELKNNKIKDFTIQPGDSGVYTIAGDFKKAQKSSSSSSSTTTLLSGYQSSVTKFTAYVLPNNSSLKQITTAAQKAGVAVNPKPAASNFWGSMLTLILPTLIMFALLYWMLIGSQRGQGGSGGPGGIMSFGRSKAKPADPKQNKIRFADVAGEEEEKQELVEVVEFLKDPKKFTKLGARIPKGVLLEGPPGTGKTLLAKAVAGEAKTPFFSISGSDFVEMFVGVGASRVRDLFENAKKSAPSIIFIDEIDAVGRRRGAGMGGGNDEREQTLNQILIEMDGFEGSEGVIVLASTNRSDVLDPALLRSGRFDRKILVGAPDVKGREAILRVHAKNKPLAADVDLKVIAQQTPGFVGADLENLLNEAALLAARNDEKAVTAADIDEAEDRVIAGPAKKDRKTTQDERETVAYHEAGHAIVGLVLNDAQVVRKVTIVPRGRAGGYALMMPKDERYLMSEKDAKEELAGLMGGRAAEILINHVASSGASNDFQQATQIAREMVTQYGMSDKLGMVQLEGSSNVFVGDPNNPNPPYSQKTSELIDEEVRRLTNEAYKRAVDIIKSHPKQHKAIAEALLKYETLDEAQIRSLFETGEIPSDLVKDSQRPARPLSYEESKAALKKNGAVDNKEAEDELKRTKMIRKMKMIPSRVPIQLQKRRQPRRLQLLDAVNNKFD.

Residues 1-10 (MKNKNRGFFR) are Cytoplasmic-facing. Residues 11 to 31 (SSLSYAFVILAVIFLIYSFFG) form a helical membrane-spanning segment. The Extracellular segment spans residues 32–137 (RSDGSVKHLS…KPAASNFWGS (106 aa)). A helical membrane pass occupies residues 138–158 (MLTLILPTLIMFALLYWMLIG). Residues 159–715 (SQRGQGGSGG…LLDAVNNKFD (557 aa)) are Cytoplasmic-facing. A disordered region spans residues 167 to 187 (GGPGGIMSFGRSKAKPADPKQ). 233-240 (GPPGTGKT) is a binding site for ATP. Histidine 455 is a binding site for Zn(2+). Glutamate 456 is a catalytic residue. Zn(2+) contacts are provided by histidine 459 and aspartate 531.

It in the central section; belongs to the AAA ATPase family. This sequence in the C-terminal section; belongs to the peptidase M41 family. In terms of assembly, homohexamer. The cofactor is Zn(2+).

The protein resides in the cell membrane. Its function is as follows. Acts as a processive, ATP-dependent zinc metallopeptidase for both cytoplasmic and membrane proteins. Plays a role in the quality control of integral membrane proteins. Can complement an E.coli ftsH disruption mutant. In Oenococcus oeni (Leuconostoc oenos), this protein is ATP-dependent zinc metalloprotease FtsH.